We begin with the raw amino-acid sequence, 412 residues long: Cinnamoyl-CoA:phenyllactate CoA-transferase (412 aa).

Asparagine 102 lines the CoA pocket. The Nucleophile role is filled by aspartate 176.

As to quaternary structure, homodimer. Part of the heterotrimeric phenyllactate dehydratase complex FldABC, composed of (R)-phenyllactate CoA-transferase (FldA) and a heterodimeric (R)-phenyllactyl-CoA dehydratase (FldB and FldC).

It catalyses the reaction (E)-cinnamoyl-CoA + (R)-3-phenyllactate = (R)-3-phenyllactoyl-CoA + (E)-cinnamate. It participates in amino-acid degradation; L-phenylalanine degradation. Its function is as follows. Component of the phenyllactate dehydratase complex FldABC that is involved in the fermentation of L-phenylalanine via a Stickland reaction. This complex catalyzes the reversible syn-dehydration of (R)-phenyllactate to (E)-cinnamate in two steps, a CoA-transfer from cinnamoyl-CoA to phenyllactate, catalyzed by FldA, followed by the dehydration of phenyllactyl-CoA to cinnamoyl-CoA, catalyzed by FldB and FldC. In vitro, FldA can use 3-phenylpropanoate as a better CoA-acceptor than phenyllactate. The polypeptide is Cinnamoyl-CoA:phenyllactate CoA-transferase (Clostridium sporogenes).